The sequence spans 544 residues: Esterase-6 (544 aa).

Positions 1-21 (MNYVGLGLIIVLSCLWLGSNA) are cleaved as a signal peptide. Residue N42 is glycosylated (N-linked (GlcNAc...) asparagine). A disulfide bridge connects residues C86 and C105. The active-site Acyl-ester intermediate is the S209. C261 and C273 are disulfide-bonded. N420 and N456 each carry an N-linked (GlcNAc...) asparagine glycan. The active-site Charge relay system is H466. N506 is a glycosylation site (N-linked (GlcNAc...) asparagine). A disulfide bridge links C514 with C535.

The protein belongs to the type-B carboxylesterase/lipase family. As to quaternary structure, monomer. Specifically expressed in the ejaculatory bulbs of male.

The protein localises to the secreted. The catalysed reaction is a carboxylic ester + H2O = an alcohol + a carboxylate + H(+). Its function is as follows. Transferred from the ejaculatory bulbs of males to the female genitals upon copulation, plays an important role in the reproductive biology. The chain is Esterase-6 (Est-6) from Drosophila melanogaster (Fruit fly).